The primary structure comprises 409 residues: UV excision repair protein RAD23 homolog B (409 aa).

The Ubiquitin-like domain occupies 1-79 (MQVTLKTLQQ…VVVMVTKPKA (79 aa)). Residues 80–175 (VSTPAPATTQ…STSGDSSRSN (96 aa)) are disordered. Positions 81 to 143 (STPAPATTQQ…SSEPAPASAA (63 aa)) are enriched in low complexity. Residues 144 to 153 (KQEKPAEKPA) show a composition bias toward basic and acidic residues. Threonine 155 is subject to Phosphothreonine. Serine 160 is subject to Phosphoserine. A compositionally biased stretch (polar residues) spans 160–175 (SPTATDSTSGDSSRSN). Threonine 164 bears the Phosphothreonine mark. Serine 174 carries the post-translational modification Phosphoserine. At threonine 186 the chain carries Phosphothreonine. Positions 188–228 (QSYENMVTEIMSMGYEREQVIAALRASFNNPDRAVEYLLMG) constitute a UBA 1 domain. Serine 199 carries the phosphoserine modification. Phosphotyrosine is present on tyrosine 202. Residues 236–276 (QAVVDPPQAASTGAPQSSAVAAAAATTTATTTTTSSGGHPL) are disordered. The span at 252 to 271 (SSAVAAAAATTTATTTTTSS) shows a compositional bias: low complexity. One can recognise an STI1 domain in the interval 274-317 (HPLEFLRNQPQFQQMRQIIQQNPSLLPALLQQIGRENPQLLQQI). Residues 364–404 (PQEKEAIERLKALGFPEGLVIQAYFACEKNENLAANFLLQQ) form the UBA 2 domain.

The protein belongs to the RAD23 family. As to quaternary structure, component of the XPC complex composed of XPC, RAD23B and CETN2. Interacts with NGLY1 and PSMC1. Interacts with ATXN3. Interacts with PSMD4 and PSMC5. Interacts with AMFR. Interacts with VCP; the interaction is indirect and mediated by NGLY1.

It localises to the nucleus. It is found in the cytoplasm. Functionally, multiubiquitin chain receptor involved in modulation of proteasomal degradation. Binds to polyubiquitin chains. Proposed to be capable to bind simultaneously to the 26S proteasome and to polyubiquitinated substrates and to deliver ubiquitinated proteins to the proteasome. May play a role in endoplasmic reticulum-associated degradation (ERAD) of misfolded glycoproteins by association with PNGase and delivering deglycosylated proteins to the proteasome. Involved in global genome nucleotide excision repair (GG-NER) by acting as component of the XPC complex. Cooperatively with CETN2 appears to stabilize XPC. May protect XPC from proteasomal degradation. Its function is as follows. The XPC complex is proposed to represent the first factor bound at the sites of DNA damage and together with other core recognition factors, XPA, RPA and the TFIIH complex, is part of the pre-incision (or initial recognition) complex. The XPC complex recognizes a wide spectrum of damaged DNA characterized by distortions of the DNA helix such as single-stranded loops, mismatched bubbles or single-stranded overhangs. The orientation of XPC complex binding appears to be crucial for inducing a productive NER. XPC complex is proposed to recognize and to interact with unpaired bases on the undamaged DNA strand which is followed by recruitment of the TFIIH complex and subsequent scanning for lesions in the opposite strand in a 5'-to-3' direction by the NER machinery. Cyclobutane pyrimidine dimers (CPDs) which are formed upon UV-induced DNA damage esacpe detection by the XPC complex due to a low degree of structural perurbation. Instead they are detected by the UV-DDB complex which in turn recruits and cooperates with the XPC complex in the respective DNA repair. In vitro, the XPC:RAD23B dimer is sufficient to initiate NER; it preferentially binds to cisplatin and UV-damaged double-stranded DNA and also binds to a variety of chemically and structurally diverse DNA adducts. XPC:RAD23B contacts DNA both 5' and 3' of a cisplatin lesion with a preference for the 5' side. XPC:RAD23B induces a bend in DNA upon binding. XPC:RAD23B stimulates the activity of DNA glycosylases TDG and SMUG1. In Homo sapiens (Human), this protein is UV excision repair protein RAD23 homolog B (RAD23B).